The chain runs to 250 residues: Gamma-secretase subunit APH1-like (250 aa).

7 helical membrane-spanning segments follow: residues 5–25 (AGIG…VSVI), 29–49 (PFLI…LIIL), 57–77 (LPLK…SVCF), 116–136 (IALA…CLSL), 157–177 (FLIS…SMVI), 191–211 (IIVP…FASE), and 212–232 (GCVI…VHCG).

It belongs to the APH-1 family. Probable component of the gamma-secretase complex, a complex composed of a presenilin homodimer, nicastrin, APH1 and PEN2.

The protein resides in the membrane. In terms of biological role, probable subunit of the gamma-secretase complex, an endoprotease complex that catalyzes the intramembrane cleavage of integral proteins such as Notch receptors. The polypeptide is Gamma-secretase subunit APH1-like (Arabidopsis thaliana (Mouse-ear cress)).